A 245-amino-acid polypeptide reads, in one-letter code: tRNA (guanine-N(1)-)-methyltransferase (245 aa).

Residues glycine 113 and 133 to 138 each bind S-adenosyl-L-methionine; that span reads IGDYVL.

The protein belongs to the RNA methyltransferase TrmD family. In terms of assembly, homodimer.

Its subcellular location is the cytoplasm. It carries out the reaction guanosine(37) in tRNA + S-adenosyl-L-methionine = N(1)-methylguanosine(37) in tRNA + S-adenosyl-L-homocysteine + H(+). Functionally, specifically methylates guanosine-37 in various tRNAs. The sequence is that of tRNA (guanine-N(1)-)-methyltransferase from Histophilus somni (strain 129Pt) (Haemophilus somnus).